A 255-amino-acid polypeptide reads, in one-letter code: Aliphatic sulfonates import ATP-binding protein SsuB (255 aa).

In terms of domain architecture, ABC transporter spans 12 to 233 (LLLNAVSKHY…RLGSVRLAEL (222 aa)). Position 44 to 51 (44 to 51 (GRSGGGKS)) interacts with ATP.

It belongs to the ABC transporter superfamily. Aliphatic sulfonates importer (TC 3.A.1.17.2) family. In terms of assembly, the complex is composed of two ATP-binding proteins (SsuB), two transmembrane proteins (SsuC) and a solute-binding protein (SsuA).

Its subcellular location is the cell inner membrane. It catalyses the reaction ATP + H2O + aliphatic sulfonate-[sulfonate-binding protein]Side 1 = ADP + phosphate + aliphatic sulfonateSide 2 + [sulfonate-binding protein]Side 1.. In terms of biological role, part of the ABC transporter complex SsuABC involved in aliphatic sulfonates import. Responsible for energy coupling to the transport system. The sequence is that of Aliphatic sulfonates import ATP-binding protein SsuB from Escherichia coli O6:H1 (strain CFT073 / ATCC 700928 / UPEC).